Consider the following 1642-residue polypeptide: DNA-directed RNA polymerase I subunit RPA1 (1642 aa).

Zn(2+) is bound by residues C66, C69, C75, and H78. The Mg(2+) site is built by D565, D567, and D569. The bridging helix stretch occupies residues 939–951 (PQDFFFHCMAGRE). Positions 1337–1428 (DADKDDDNDL…GNDNDGDDKA (92 aa)) are disordered. The segment covering 1340 to 1350 (KDDDNDLDNGD) has biased composition (acidic residues). The segment covering 1351 to 1361 (EVGRSKAKAND) has biased composition (basic and acidic residues). 2 stretches are compositionally biased toward acidic residues: residues 1362 to 1373 (DDSSDDNDDDDA) and 1386 to 1424 (KDYDDPDDVEELHDANDDDDEAEDEDDEEKGQDGNDNDG). Residues S1364 and S1365 each carry the phosphoserine modification.

The protein belongs to the RNA polymerase beta' chain family. In terms of assembly, component of the RNA polymerase I (Pol I) complex consisting of at least 13 subunits. Phosphorylated.

It localises to the nucleus. The protein localises to the nucleolus. The enzyme catalyses RNA(n) + a ribonucleoside 5'-triphosphate = RNA(n+1) + diphosphate. Its function is as follows. DNA-dependent RNA polymerase catalyzes the transcription of DNA into RNA using the four ribonucleoside triphosphates as substrates. Largest and catalytic core component of RNA polymerase I which synthesizes ribosomal RNA precursors. Forms the polymerase active center together with the second largest subunit. A single stranded DNA template strand of the promoter is positioned within the central active site cleft of Pol I. A bridging helix emanates from RPA1 and crosses the cleft near the catalytic site and is thought to promote translocation of Pol I by acting as a ratchet that moves the RNA-DNA hybrid through the active site by switching from straight to bent conformations at each step of nucleotide addition. In Drosophila melanogaster (Fruit fly), this protein is DNA-directed RNA polymerase I subunit RPA1 (RpI1).